The sequence spans 86 residues: Putative pro-MCH-like protein 2 (86 aa).

Residues 31-49 form an NGE-like region; that stretch reads GSVAFPAENGVQDTESTLE. A disordered region spans residues 40-60; sequence GVQDTESTLEKRETGDEENSA. An NEI-like region spans residues 52–64; that stretch reads ETGDEENSAKFPI. Positions 68-86 are melanin-concentrating hormone-like; that stretch reads DFDTLRCMLGRVYQRCWQV.

This sequence belongs to the melanin-concentrating hormone family. As to expression, expressed in testis but not in brain.

The sequence is that of Putative pro-MCH-like protein 2 (PMCHL2) from Homo sapiens (Human).